A 2554-amino-acid chain; its full sequence is MTMFWQQNVDHQSDEQDKQAKGAAPTKRLNISFNVKIAVNVNTKMTTTHINQQAPGTSSSSSNSQNASPSKIVVRQQSSSFDLRQQLARLGRQLASGQDGHGGISTILIINLLLLILLSICCDVCRSHNYTVHQSPEPVSKDQMRLLRPKLDSDVVEKVAIWHKHAAAAPPSIVEGIAISSRPQSTMAHHPDDRDRDRDPSEEQHGVDERMVLERVTRDCVQRCIVEEDLFLDEFGIQCEKADNGEKCYKTRCTKGCAQWYRALKELESCQEACLSLQFYPYDMPCIGACEMAQRDYWHLQRLAISHLVERTQPQLERAPRADGQSTPLTIRWAMHFPEHYLASRPFNIQYQFVDHHGEELDLEQEDQDASGETGSSAWFNLADYDCDEYYVCEILEALIPYTQYRFRFELPFGENRDEVLYSPATPAYQTPPEGAPISAPVIEHLMGLDDSHLAVHWHPGRFTNGPIEGYRLRLSSSEGNATSEQLVPAGRGSYIFSQLQAGTNYTLALSMINKQGEGPVAKGFVQTHSARNEKPAKDLTESVLLVGRRAVMWQSLEPAGENSMIYQSQEELADIAWSKREQQLWLLNVHGELRSLKFESGQMVSPAQQLKLDLGNISSGRWVPRRLSFDWLHHRLYFAMESPERNQSSFQIISTDLLGESAQKVGESFDLPVEQLEVDALNGWIFWRNEESLWRQDLHGRMIHRLLRIRQPGWFLVQPQHFIIHLMLPQEGKFLEISYDGGFKHPLPLPPPSNGAGNGPASSHWQSFALLGRSLLLPDSGQLILVEQQGQAASPSASWPLKNLPDCWAVILLVPESQPLTSAGGKPHSLKALLGAQAAKISWKEPERNPYQSADAARSWSYELEVLDVASQSAFSIRNIRGPIFGLQRLQPDNLYQLRVRAINVDGEPGEWTEPLAARTWPLGPHRLRWASRQGSVIHTNELGEGLEVQQEQLERLPGPMTMVNESVGYYVTGDGLLHCINLVHSQWGCPISEPLQHVGSVTYDWRGGRVYWTDLARNCVVRMDPWSGSRELLPVFEANFLALDPRQGHLYYATSSQLSRHGSTPDEAVTYYRVNGLEGSIASFVLDTQQDQLFWLVKGSGALRLYRAPLTAGGDSLQMIQQIKGVFQAVPDSLQLLRPLGALLWLERSGRRARLVRLAAPLDVMELPTPDQASPASALQLLDPQPLPPRDEGVIPMTVLPDSVRLDDGHWDDFHVRWQPSTSGGNHSVSYRLLLEFGQRLQTLDLSTPFARLTQLPQAQLQLKISITPRTAWRSGDTTRVQLTTPPVAPSQPRRLRVFVERLATALQEANVSAVLRWDAPEQGQEAPMQALEYHISCWVGSELHEELRLNQSALEARVEHLQPDQTYHFQVEARVAATGAAAGAASHALHVAPEVQAVPRVLYANAEFIGELDLDTRNRRRLVHTASPVEHLVGIEGEQRLLWVNEHVELLTHVPGSAPAKLARMRAEVLALAVDWIQRIVYWAELDATAPQAAIIYRLDLCNFEGKILQGERVWSTPRGRLLKDLVALPQAQSLIWLEYEQGSPRNGSLRGRNLTDGSELEWATVQPLIRLHAGSLEPGSETLNLVDNQGKLCVYDVARQLCTASALRAQLNLLGEDSIAGQLAQDSGYLYAVKNWSIRAYGRRRQQLEYTVELEPEEVRLLQAHNYQAYPPKNCLLLPSSGGSLLKATDCEEQRCLLNLPMITASEDCPLPIPGVRYQLNLTLARGPGSEEHDHGVEPLGQWLLGAGESLNLTDLLPFTRYRVSGILSSFYQKKLALPTLVLAPLELLTASATPSPPRNFSVRVLSPRELEVSWLPPEQLRSESVYYTLHWQQELDGENVQDRREWEAHERRLETAGTHRLTGIKPGSGYSLWVQAHATPTKSNSSERLHVRSFAELPELQLLELGPYSLSLTWAGTPDPLGSLQLECRSSAEQLRRNVAGNHTKMVVEPLQPRTRYQCRLLLGYAATPGAPLYHGTAEVYETLGDAPSQPGKPQLEHIAEEVFRVTWTAARGNGAPIALYNLEALQARSDIRRRRRRRRRNSGGSLEQLPWAEEPVVVEDQWLDFCNTTELSCIVKSLHSSRLLLFRVRARSLEHGWGPYSEESERVAEPFVSPEKRGSLVLAIIAPAAIVSSCVLALVLVRKVQKRRLRAKKLLQQSRPSIWSNLSTLQTQQQLMAVRNRAFSTTLSDADIALLPQINWSQLKLLRFLGSGAFGEVYEGQLKTEDSEEPQRVAIKSLRKGASEFAELLQEAQLMSNFKHENIVCLVGICFDTESISLIMEHMEAGDLLSYLRAARATSTQEPQPTAGLSLSELLAMCIDVANGCSYLEDMHFVHRDLACRNCLVTESTGSTDRRRTVKIGDFGLARDIYKSDYYRKEGEGLLPVRWMSPESLVDGLFTTQSDVWAFGVLCWEILTLGQQPYAARNNFEVLAHVKEGGRLQQPPMCTEKLYSLLLLCWRTDPWERPSFRRCYNTLHAISTDLRRTQMASATADTVVSCSRPEFKVRFDGQPLEEHREHNERPEDENLTLREVPLKDKQLYANEGVSRL.

Positions methionine 1 to aspartate 10 are enriched in polar residues. The segment at methionine 1–proline 25 is disordered. Over methionine 1–arginine 2123 the chain is Extracellular. The span at histidine 11 to alanine 20 shows a compositional bias: basic and acidic residues. The N-linked (GlcNAc...) asparagine glycan is linked to asparagine 30. The segment covering asparagine 51–serine 70 has biased composition (low complexity). A disordered region spans residues asparagine 51–arginine 75. N-linked (GlcNAc...) asparagine glycosylation is present at asparagine 129. The interval serine 181–aspartate 208 is disordered. Over residues histidine 189–aspartate 208 the composition is skewed to basic and acidic residues. Residues alanine 440 to asparagine 533 form the Fibronectin type-III 1 domain. Residues asparagine 481, asparagine 505, asparagine 617, and asparagine 647 are each glycosylated (N-linked (GlcNAc...) asparagine). One can recognise a Fibronectin type-III 2 domain in the interval alanine 824–leucine 924. Asparagine 966 is a glycosylation site (N-linked (GlcNAc...) asparagine). The LDL-receptor class B repeat unit spans residues glycine 1010–tyrosine 1053. Fibronectin type-III domains follow at residues leucine 1202–valine 1290 and glutamine 1294–glutamate 1397. 12 N-linked (GlcNAc...) asparagine glycosylation sites follow: asparagine 1228, asparagine 1313, asparagine 1353, asparagine 1550, asparagine 1557, asparagine 1639, asparagine 1725, asparagine 1756, asparagine 1804, asparagine 1889, asparagine 1947, and asparagine 2073. 3 consecutive Fibronectin type-III domains span residues proline 1801 to glutamate 1901, leucine 1902 to threonine 1988, and glutamine 1995 to phenylalanine 2117. A helical membrane pass occupies residues glycine 2124–valine 2147. At arginine 2148 to leucine 2554 the chain is on the cytoplasmic side. The Protein kinase domain occupies leucine 2209 to serine 2485. Residues leucine 2215–valine 2223 and lysine 2242 contribute to the ATP site. The Proton acceptor role is filled by aspartate 2343. Tyrosine 2380 carries the phosphotyrosine; by autocatalysis modification. Residues glycine 2515–arginine 2527 are compositionally biased toward basic and acidic residues. The segment at glycine 2515 to threonine 2534 is disordered.

It belongs to the protein kinase superfamily. Tyr protein kinase family. Insulin receptor subfamily. As to quaternary structure, may form a complex with drk and Sos. Binds the phosphotyrosine interaction domain (PID) of Dab.

It is found in the cell membrane. The enzyme catalyses L-tyrosyl-[protein] + ATP = O-phospho-L-tyrosyl-[protein] + ADP + H(+). Functionally, receptor for an extracellular signal required to instruct a cell to differentiate into an R7 photoreceptor. The ligand for sev is the boss (bride of sevenless) protein on the surface of the neighboring R8 cell. The polypeptide is Protein sevenless (sev) (Drosophila melanogaster (Fruit fly)).